A 102-amino-acid chain; its full sequence is Large ribosomal subunit protein bL21 (102 aa).

Belongs to the bacterial ribosomal protein bL21 family. As to quaternary structure, part of the 50S ribosomal subunit. Contacts protein L20.

Functionally, this protein binds to 23S rRNA in the presence of protein L20. The polypeptide is Large ribosomal subunit protein bL21 (Phytoplasma australiense).